Consider the following 277-residue polypeptide: Glutamate racemase (277 aa).

Substrate is bound by residues 9–10 and 41–42; these read DS and YG. Cys-73 (proton donor/acceptor) is an active-site residue. Substrate is bound at residue 74–75; sequence NT. Catalysis depends on Cys-183, which acts as the Proton donor/acceptor. 184-185 is a binding site for substrate; it reads TH.

The protein belongs to the aspartate/glutamate racemases family.

It carries out the reaction L-glutamate = D-glutamate. Its pathway is cell wall biogenesis; peptidoglycan biosynthesis. In terms of biological role, provides the (R)-glutamate required for cell wall biosynthesis. The polypeptide is Glutamate racemase (Shewanella denitrificans (strain OS217 / ATCC BAA-1090 / DSM 15013)).